Consider the following 590-residue polypeptide: Cationic amino acid transporter 8, vacuolar (590 aa).

Residues 1 to 85 (MIPASMEEAH…ESENPMRRCL (85 aa)) lie on the Cytoplasmic side of the membrane. The chain crosses the membrane as a helical span at residues 86-106 (TWWDLLWLSFGSVVGSGVFVI). Over 107–114 (TGQEARVG) the chain is Vacuolar. A helical membrane pass occupies residues 115–135 (AGPAVVLSYAISGVSALLSVL). Over 136–160 (CYAEFGVEIPVAGGSFSYLRVELGD) the chain is Cytoplasmic. A helical transmembrane segment spans residues 161-181 (FIAFIAAGNILLEAMVGAAGL). The Vacuolar segment spans residues 182–209 (GRSWSSYLASLVKNDSDYFRIKVDSFAK). An N-linked (GlcNAc...) asparagine glycan is attached at N195. Residues 210–230 (GFDLLDPVAVAVLLVANGIAM) form a helical membrane-spanning segment. The Cytoplasmic segment spans residues 231 to 238 (TGTKRTSW). A helical membrane pass occupies residues 239–259 (LNLITSMVTVCIIVFIVVVGF). At 260–266 (THSKTSN) the chain is on the vacuolar side. A helical membrane pass occupies residues 267–287 (LVPFFPYGAKGVVQSAAVVYW). The Cytoplasmic portion of the chain corresponds to 288 to 310 (SYTGFDMVANMAEETEKPSRDIP). Residues 311–331 (IGLVGSMSMITVVYCLMALAL) traverse the membrane as a helical segment. Residues 332 to 359 (TMMVKYTEIDANAAYSVAFAQIGMKWAK) are Vacuolar-facing. A helical membrane pass occupies residues 360–380 (YLVGICALKGMTTSLLVGSLG). Residues 381–407 (QARYTTQIARSHMIPPWFALVHPKTGT) are Cytoplasmic-facing. A helical transmembrane segment spans residues 408–428 (PIYATLLVTILSSIISFFTSL). Position 429 (E429) is a topological domain, vacuolar. Residues 430–450 (VLSSVFSFATLFIFMLVAVAL) traverse the membrane as a helical segment. Residues 451–465 (LVRRYYVKDVTPEAG) lie on the Cytoplasmic side of the membrane. A helical membrane pass occupies residues 466–486 (LLKFLGFLFLIIASSIGVSAL). Residues 487–493 (WNSGVKG) are Vacuolar-facing. A helical membrane pass occupies residues 494 to 514 (WIAYTVTGVIWFIGTLGLALL). The Cytoplasmic segment spans residues 515–522 (PKYRVPKV). Residues 523–543 (WGVPLVPWLPSFSIAMNLFLI) traverse the membrane as a helical segment. The Vacuolar segment spans residues 544–553 (GSLGYVAFLR). The helical transmembrane segment at 554-574 (FIICTMVMLLYYLFVGLHATY) threads the bilayer. The Cytoplasmic portion of the chain corresponds to 575–590 (DVAHQPLEEAKFEGER).

The protein belongs to the amino acid-polyamine-organocation (APC) superfamily. Cationic amino acid transporter (CAT) (TC 2.A.3.3) family. Expressed in roots, stems, flowers and leaves. Mostly present in young and rapidly dividing tissues such as the shoot and root apical meristem, and in young leaves and petioles during seedling development.

Its subcellular location is the cell membrane. Permease involved in the transport of the cationic neutral or acidic amino acids. This Arabidopsis thaliana (Mouse-ear cress) protein is Cationic amino acid transporter 8, vacuolar (CAT8).